A 656-amino-acid chain; its full sequence is PAN2-PAN3 deadenylation complex subunit pan3 (656 aa).

Disordered regions lie at residues Met-1–Asp-24 and Ser-75–Asn-117. The segment at Asp-24–Asn-53 adopts a C3H1-type zinc-finger fold. The PABPC-interacting motif-2 (PAM-2) signature appears at Asn-63–Gln-83. 2 stretches are compositionally biased toward polar residues: residues Ser-75–Ala-96 and Gly-107–Asn-117. The tract at residues Gln-251–Thr-514 is pseudokinase domain. ATP is bound by residues Thr-275–Cys-280, Arg-302, Asp-352–Thr-359, and Ser-412–Lys-413. Residues Thr-515–Val-553 adopt a coiled-coil conformation. A knob domain region spans residues Val-554 to Ile-656.

This sequence belongs to the protein kinase superfamily. PAN3 family. Homodimer. Forms a heterotrimer with a catalytic subunit par-1/pan2 to form the poly(A)-nuclease (PAN) deadenylation complex. Interacts (via PAM-2 motif) with poly(A)-binding protein pabp-1 (via PABC domain), conferring substrate specificity of the enzyme complex.

The protein resides in the cytoplasm. Functionally, regulatory subunit of the poly(A)-nuclease (PAN) deadenylation complex, one of two cytoplasmic mRNA deadenylases involved in mRNA turnover. PAN specifically shortens poly(A) tails of RNA and the activity is stimulated by poly(A)-binding protein pabp-1. PAN deadenylation is followed by rapid degradation of the shortened mRNA tails by the CCR4-NOT complex. Deadenylated mRNAs are then degraded by two alternative mechanisms, namely exosome-mediated 3'-5' exonucleolytic degradation, or deadenylation-dependent mRNA decaping and subsequent 5'-3' exonucleolytic degradation by rgb-30/xrn1. May also be involved in post-transcriptional maturation of mRNA poly(A) tails. par-2/pan3 acts as a positive regulator for PAN activity, recruiting the catalytic subunit par-1/pan2 to mRNA via its interaction with RNA and with pabp-1. The polypeptide is PAN2-PAN3 deadenylation complex subunit pan3 (par-2) (Neurospora crassa (strain ATCC 24698 / 74-OR23-1A / CBS 708.71 / DSM 1257 / FGSC 987)).